The sequence spans 508 residues: Aspartic proteinase yapsin-3 (508 aa).

The N-terminal stretch at 1 to 20 (MKLQLAAVATLAVLTSPAFG) is a signal peptide. The propeptide occupies 21-47 (RVLPDGKYVKIPFTKKKNGDNGELSKR). The 332-residue stretch at 63-394 (YSVELAIGTP…DLDNYEISLA (332 aa)) folds into the Peptidase A1 domain. A glycan (N-linked (GlcNAc...) asparagine) is linked at N75. Residue D81 is part of the active site. N120, N160, N163, and N275 each carry an N-linked (GlcNAc...) asparagine glycan. D288 is an active-site residue. N-linked (GlcNAc...) asparagine glycans are attached at residues N309, N328, N367, N422, N445, and N462. A compositionally biased stretch (low complexity) spans 448 to 468 (STATTTRSTTTKKTNSTTTAK). A disordered region spans residues 448 to 476 (STATTTRSTTTKKTNSTTTAKSTHKSKRA). N483 carries GPI-anchor amidated asparagine lipidation. A propeptide spans 484–508 (SASSIRSTLGLLLVPSLLILSVFFS) (removed in mature form).

This sequence belongs to the peptidase A1 family. Post-translationally, can also be processed to start at Phe-54.

Its subcellular location is the cell membrane. In terms of biological role, cleaves proteins C-terminally to mono- and paired-basic residues. Required for cell wall integrity. The sequence is that of Aspartic proteinase yapsin-3 (YPS3) from Saccharomyces cerevisiae (strain ATCC 204508 / S288c) (Baker's yeast).